Reading from the N-terminus, the 390-residue chain is GDSL esterase/lipase At1g28640 (390 aa).

Residues 1–26 (MASSLEKLISSFLLVLYSTTIIVASS) form the signal peptide. The active-site Nucleophile is the S42. N105, N138, and N321 each carry an N-linked (GlcNAc...) asparagine glycan. Residues D346 and H349 contribute to the active site. N364 carries N-linked (GlcNAc...) asparagine glycosylation.

The protein belongs to the 'GDSL' lipolytic enzyme family.

It localises to the secreted. The sequence is that of GDSL esterase/lipase At1g28640 from Arabidopsis thaliana (Mouse-ear cress).